A 238-amino-acid chain; its full sequence is tRNA (guanine-N(7)-)-methyltransferase (238 aa).

4 residues coordinate S-adenosyl-L-methionine: Glu68, Glu93, Asp120, and Asp143. The active site involves Asp143. Residues Lys147, Asp179, and 216–219 (TKFE) each bind substrate.

This sequence belongs to the class I-like SAM-binding methyltransferase superfamily. TrmB family.

It catalyses the reaction guanosine(46) in tRNA + S-adenosyl-L-methionine = N(7)-methylguanosine(46) in tRNA + S-adenosyl-L-homocysteine. It participates in tRNA modification; N(7)-methylguanine-tRNA biosynthesis. Functionally, catalyzes the formation of N(7)-methylguanine at position 46 (m7G46) in tRNA. This is tRNA (guanine-N(7)-)-methyltransferase from Shewanella sp. (strain W3-18-1).